A 377-amino-acid chain; its full sequence is Succinyl-diaminopimelate desuccinylase (377 aa).

Histidine 67 contributes to the Zn(2+) binding site. The active site involves aspartate 69. Aspartate 100 contributes to the Zn(2+) binding site. Catalysis depends on glutamate 134, which acts as the Proton acceptor. Zn(2+)-binding residues include glutamate 135, glutamate 163, and histidine 349.

It belongs to the peptidase M20A family. DapE subfamily. Homodimer. Zn(2+) serves as cofactor. The cofactor is Co(2+).

It carries out the reaction N-succinyl-(2S,6S)-2,6-diaminopimelate + H2O = (2S,6S)-2,6-diaminopimelate + succinate. The protein operates within amino-acid biosynthesis; L-lysine biosynthesis via DAP pathway; LL-2,6-diaminopimelate from (S)-tetrahydrodipicolinate (succinylase route): step 3/3. Its function is as follows. Catalyzes the hydrolysis of N-succinyl-L,L-diaminopimelic acid (SDAP), forming succinate and LL-2,6-diaminopimelate (DAP), an intermediate involved in the bacterial biosynthesis of lysine and meso-diaminopimelic acid, an essential component of bacterial cell walls. The protein is Succinyl-diaminopimelate desuccinylase of Haemophilus influenzae (strain PittEE).